The primary structure comprises 166 residues: Large ribosomal subunit protein uL10 (166 aa).

It belongs to the universal ribosomal protein uL10 family. Part of the ribosomal stalk of the 50S ribosomal subunit. The N-terminus interacts with L11 and the large rRNA to form the base of the stalk. The C-terminus forms an elongated spine to which L12 dimers bind in a sequential fashion forming a multimeric L10(L12)X complex.

Functionally, forms part of the ribosomal stalk, playing a central role in the interaction of the ribosome with GTP-bound translation factors. This Staphylococcus haemolyticus (strain JCSC1435) protein is Large ribosomal subunit protein uL10.